The primary structure comprises 183 residues: Bifunctional protein PyrR (183 aa).

Residues 102–114 carry the PRPP-binding motif; it reads VVLVDDVLYTGRT.

The protein belongs to the purine/pyrimidine phosphoribosyltransferase family. PyrR subfamily. In terms of assembly, homodimer and homohexamer; in equilibrium.

It carries out the reaction UMP + diphosphate = 5-phospho-alpha-D-ribose 1-diphosphate + uracil. Functionally, regulates transcriptional attenuation of the pyrimidine nucleotide (pyr) operon by binding in a uridine-dependent manner to specific sites on pyr mRNA. This disrupts an antiterminator hairpin in the RNA and favors formation of a downstream transcription terminator, leading to a reduced expression of downstream genes. Also displays a weak uracil phosphoribosyltransferase activity which is not physiologically significant. In Listeria monocytogenes serotype 4b (strain CLIP80459), this protein is Bifunctional protein PyrR.